Consider the following 356-residue polypeptide: MNAARTGYRVFSANSTAACTELAKRITERLGAELGKSVVYQETNGETRVEIKESVRGQDIFIIQTIPRDVNTAVMELLIMAYALKTACARNIIGVIPYFPYSKQSKMRKRGSIVCKLLASMLAKAGLTHIITMDLHQKEIQGFFSFPVDNLRASPFLLQYIQEEIPNYRNAVIVAKSPDAAKRAQSYAERLRLGLAVIHGEAQCTELDMDDGRHSPPMVKNATVHPGLELPLMMAKEKPPITVVGDVGGRIAIIVDDIIDDVESFVAAAEILKERGAYKIYVMATHGILSAEAPRLIEESSVDEVVVTNTVPHEVQKLQCPKIKTVDISLILSEAIRRIHNGESMAYLFRNITVDD.

Methionine 1 carries the post-translational modification N-acetylmethionine. Asparagine 2 carries the N-acetylproline modification. Phosphoserine is present on residues serine 177 and serine 215.

It belongs to the ribose-phosphate pyrophosphokinase family. As to quaternary structure, binds to PRPS1 and PRPS2. Ubiquitous.

Functionally, seems to play a negative regulatory role in 5-phosphoribose 1-diphosphate synthesis. This Homo sapiens (Human) protein is Phosphoribosyl pyrophosphate synthase-associated protein 1 (PRPSAP1).